Consider the following 125-residue polypeptide: Holo-[acyl-carrier-protein] synthase (125 aa).

D8 and E57 together coordinate Mg(2+).

It belongs to the P-Pant transferase superfamily. AcpS family. Mg(2+) is required as a cofactor.

The protein resides in the cytoplasm. It catalyses the reaction apo-[ACP] + CoA = holo-[ACP] + adenosine 3',5'-bisphosphate + H(+). In terms of biological role, transfers the 4'-phosphopantetheine moiety from coenzyme A to a Ser of acyl-carrier-protein. This chain is Holo-[acyl-carrier-protein] synthase, found in Laribacter hongkongensis (strain HLHK9).